A 133-amino-acid polypeptide reads, in one-letter code: Large ribosomal subunit protein bL17 (133 aa).

This sequence belongs to the bacterial ribosomal protein bL17 family. Part of the 50S ribosomal subunit. Contacts protein L32.

The polypeptide is Large ribosomal subunit protein bL17 (Nitratidesulfovibrio vulgaris (strain ATCC 29579 / DSM 644 / CCUG 34227 / NCIMB 8303 / VKM B-1760 / Hildenborough) (Desulfovibrio vulgaris)).